A 419-amino-acid chain; its full sequence is Interferon regulatory factor 3 (419 aa).

Position 3 is a phosphothreonine (threonine 3). Residues 5 to 111 (KPRILPWLVS…DPHKVYEFVT (107 aa)) constitute a DNA-binding region (IRF tryptophan pentad repeat). Serine 14 bears the Phosphoserine mark. Threonine 75 carries the post-translational modification Phosphothreonine. Residues serine 97, serine 123, and serine 135 each carry the phosphoserine modification. Positions 140–419 (PKLFDGLILG…DMDFQATGNI (280 aa)) are mediates interaction with ZDHHC11. A Glycyl lysine isopeptide (Lys-Gly) (interchain with G-Cter in ISG15) cross-link involves residue lysine 188. An interaction with HERC5 region spans residues 194 to 353 (EQWEFEVTAF…MWPQDQPWVK (160 aa)). 3 positions are modified to phosphothreonine: threonine 230, threonine 237, and threonine 246. Glycyl lysine isopeptide (Lys-Gly) (interchain with G-Cter in ISG15) cross-links involve residues lysine 353 and lysine 359. N6-acetyllysine is present on lysine 359. The residue at position 378 (serine 378) is a Phosphoserine. A Diphosphoserine modification is found at serine 379. A Phosphoserine; by TBK1 modification is found at serine 379. Serine 388 carries the post-translational modification Phosphoserine; by IKKE. Serine 390 is modified (phosphoserine). Position 396 is a phosphothreonine (threonine 396).

This sequence belongs to the IRF family. Monomer. Homodimer; phosphorylation-induced. Interacts (when phosphorylated) with CREBBP. Interacts with MAVS (via phosphorylated pLxIS motif). Interacts with TICAM1 (via phosphorylated pLxIS motif). Interacts with STING1 (via phosphorylated pLxIS motif). Interacts with IKBKE and TBK1. Interacts with TICAM2. Interacts with RBCK1. Interacts with HERC5. Interacts with DDX3X; the interaction allows the phosphorylation and activation of IRF3 by IKBKE. Interacts with TRIM21 and ULK1, in the presence of TRIM21; this interaction leads to IRF3 degradation by autophagy. Interacts with RIOK3; RIOK3 probably mediates the interaction of TBK1 with IRF3. Interacts with ILRUN; the interaction inhibits IRF3 binding to its DNA consensus sequence. Interacts with LYAR; this interaction impairs IRF3 DNA-binding activity. Interacts with TRAF3. Interacts with ZDHHC11; ZDHHC11 recruits IRF3 to STING1 upon DNA virus infection and thereby promotes IRF3 activation. Interacts with HSP90AA1; the interaction mediates IRF3 association with TOMM70. Interacts with BCL2; the interaction decreases upon Sendai virus infection. Interacts with BAX; the interaction is direct, increases upon virus infection and mediates the formation of the apoptosis complex TOMM70:HSP90AA1:IRF3:BAX. Interacts with DDX56. Interacts with NBR1. Post-translationally, constitutively phosphorylated on many Ser/Thr residues. Activated following phosphorylation by TBK1 and IKBKE. Innate adapter proteins, such as MAVS, STING1 or TICAM1, are first activated by viral RNA, cytosolic DNA, and bacterial lipopolysaccharide (LPS), respectively, leading to activation of the kinases TBK1 and IKBKE. These kinases then phosphorylate the adapter proteins on the pLxIS motif, leading to recruitment of IRF3, thereby licensing IRF3 for phosphorylation by TBK1. Phosphorylation at Ser-379 is followed by pyrophosphorylation at the same residue, promoting phosphorylation at Ser-388. Phosphorylated IRF3 dissociates from the adapter proteins, dimerizes, and then enters the nucleus to induce IFNs. Pyrophosphorylated by UAP1 following phosphorylation at Ser-379 by TBK1. Pyrophosphorylation promotes subsequent phosphorylation at Ser-388, leading to homodimerization of IRF3. In terms of processing, acetylation at Lys-359 by KAT8 inhibits recruimtent to promoters and transcription factor activity. Acetylation by KAT8 is promoted by phosphorylation at Ser-388. Post-translationally, ubiquitinated; ubiquitination involves RBCK1 leading to proteasomal degradation. Polyubiquitinated; ubiquitination involves TRIM21 leading to proteasomal degradation. Ubiquitinated by UBE3C, leading to its degradation. Deubiquitinated by USP5 on both 'Lys-48'-linked unanchored and 'Lys-63'-linked anchored polyubiquitin, leading to inhibition of anti-RNA viral innate immunity. ISGylated by HERC5 resulting in sustained IRF3 activation and in the inhibition of IRF3 ubiquitination by disrupting PIN1 binding. The phosphorylation state of IRF3 does not alter ISGylation. In terms of processing, proteolytically cleaved by apoptotic caspases during apoptosis, leading to its inactivation. Cleavage by CASP3 during virus-induced apoptosis inactivates it, preventing cytokine overproduction.

Its subcellular location is the cytoplasm. It is found in the nucleus. It localises to the mitochondrion. With respect to regulation, in the absence of viral infection, maintained as a monomer in an autoinhibited state. Phosphorylation by TBK1 and IKBKE disrupts this autoinhibition leading to the liberation of the DNA-binding and dimerization activities and its nuclear localization where it can activate type I IFN and ISG genes. Phosphorylation and activation follow the following steps: innate adapter proteins, such as MAVS, STING1 or TICAM1, are first activated by viral RNA, cytosolic DNA and bacterial lipopolysaccharide (LPS), respectively, leading to activation of the kinases TBK1 and IKBKE. These kinases then phosphorylate the adapter proteins on their pLxIS motif, leading to recruitment of IRF3, thereby licensing IRF3 for phosphorylation by TBK1. Phosphorylated IRF3 dissociates from the adapter proteins, dimerizes, and then enters the nucleus to induce IFNs. In terms of biological role, key transcriptional regulator of type I interferon (IFN)-dependent immune responses which plays a critical role in the innate immune response against DNA and RNA viruses. Regulates the transcription of type I IFN genes (IFN-alpha and IFN-beta) and IFN-stimulated genes (ISG) by binding to an interferon-stimulated response element (ISRE) in their promoters. Acts as a more potent activator of the IFN-beta (IFNB) gene than the IFN-alpha (IFNA) gene and plays a critical role in both the early and late phases of the IFNA/B gene induction. Found in an inactive form in the cytoplasm of uninfected cells and following viral infection, double-stranded RNA (dsRNA), or toll-like receptor (TLR) signaling, is phosphorylated by IKBKE and TBK1 kinases. This induces a conformational change, leading to its dimerization and nuclear localization and association with CREB binding protein (CREBBP) to form dsRNA-activated factor 1 (DRAF1), a complex which activates the transcription of the type I IFN and ISG genes. Can activate distinct gene expression programs in macrophages and can induce significant apoptosis in primary macrophages. This Mus musculus (Mouse) protein is Interferon regulatory factor 3 (Irf3).